The following is a 376-amino-acid chain: MGCFRQTRDDEDDKLRKEANKKIEKQLAKDKLLYRGTHRLLLLGAGESGKSTIVKQMRILHVNGFSPEERKQKIEDIKRNVRDAILTITGAMSTLNPPVQLEHPQNKAKVDYIQDKASQAEFDYPPIFYEYTEILWKDKGVQAAFERSNEYQLIDCAQYFLDRVHIIRQAEYTPSEQDILRCRVLTSGIFETKFSVDKVNFHMFDVGGQRDERRKWIQCFNDVTAIIFVTACSGYNMVLREDATQNRLKESLDLFKSIWNNRWLRTISVILFLNKQDLLAEKVKAGKSKIEDYFPEYARYQVPPDASSEPGEDTEVVRAKYFIRDEFLRISTASGDGRHYCYPHFTCAVDTENIRRVFDDCRDIIQRMHLRQYELL.

Residue Gly2 is the site of N-palmitoyl glycine attachment. The S-palmitoyl cysteine moiety is linked to residue Cys3. The G-alpha domain maps to Gly36–Leu376. The G1 motif stretch occupies residues Arg39 to Thr52. GTP is bound by residues Gly44–Ser51, Leu180–Thr186, Asp205–Gln209, Asn274–Asp277, and Ala348. Residues Ser51 and Thr186 each contribute to the Mg(2+) site. Residues Asp178–Thr186 are G2 motif. The segment at Phe201–Arg210 is G3 motif. The segment at Ile270–Asp277 is G4 motif. Positions Thr346–Thr351 are G5 motif.

It belongs to the G-alpha family. G(s) subfamily. As to quaternary structure, g proteins are composed of 3 units; alpha, beta and gamma. The alpha chain contains the guanine nucleotide binding site.

In terms of biological role, guanine nucleotide-binding proteins (G proteins) are involved as modulators or transducers in various transmembrane signaling systems. The G(s) protein is involved in hormonal regulation of adenylate cyclase: it activates the cyclase in response to beta-adrenergic stimuli. This chain is Guanine nucleotide-binding protein G(s) subunit alpha, found in Lymnaea stagnalis (Great pond snail).